The sequence spans 178 residues: MTKKEQALIEQYAKSLVEVASEHHSLDALQADVLAILETFVTTNLDQSLSSLAVPHAEKIKLLTLLKGNNSVYMNNFLNLILQNEREAYLYQMLQTVLNEIAIVSNQYDVTVTSSLPLTEEQKSRVRAVVAKKFAVTAGRLIEKVDPSLIGGFIISVNNKVIDTSIRRQLQAFKMNLK.

Belongs to the ATPase delta chain family. F-type ATPases have 2 components, F(1) - the catalytic core - and F(0) - the membrane proton channel. F(1) has five subunits: alpha(3), beta(3), gamma(1), delta(1), epsilon(1). F(0) has three main subunits: a(1), b(2) and c(10-14). The alpha and beta chains form an alternating ring which encloses part of the gamma chain. F(1) is attached to F(0) by a central stalk formed by the gamma and epsilon chains, while a peripheral stalk is formed by the delta and b chains.

The protein resides in the cell membrane. F(1)F(0) ATP synthase produces ATP from ADP in the presence of a proton or sodium gradient. F-type ATPases consist of two structural domains, F(1) containing the extramembraneous catalytic core and F(0) containing the membrane proton channel, linked together by a central stalk and a peripheral stalk. During catalysis, ATP synthesis in the catalytic domain of F(1) is coupled via a rotary mechanism of the central stalk subunits to proton translocation. Functionally, this protein is part of the stalk that links CF(0) to CF(1). It either transmits conformational changes from CF(0) to CF(1) or is implicated in proton conduction. This Streptococcus pyogenes serotype M6 (strain ATCC BAA-946 / MGAS10394) protein is ATP synthase subunit delta.